The primary structure comprises 231 residues: MKFKFLLTPLLSSVLFLSACSATFEADLKNLIKETDGKDLDVSKLIITSEGKQILIGYLKKSYEVNSEKTTELLLNAWKQSAEKNEIGIDLFNWTKSIFSGVNTFNKKQKVEYFNMTYKGISDVSVKAKLNHTLTWNENYSYRGFNIHKGDKHYFNSFLTLKANSYLPFTSKNFDVYSKRIRLSVSFHWILKGKDELSQKILDKTVLNGYIEYIVDNYQINLFRYLVYLIE.

The N-terminal stretch at 1 to 19 (MKFKFLLTPLLSSVLFLSA) is a signal peptide. Cys-20 carries N-palmitoyl cysteine lipidation. The S-diacylglycerol cysteine moiety is linked to residue Cys-20.

Belongs to the MG439/MG440 family.

Its subcellular location is the cell membrane. This is an uncharacterized protein from Mycoplasma pneumoniae (strain ATCC 29342 / M129 / Subtype 1) (Mycoplasmoides pneumoniae).